Reading from the N-terminus, the 279-residue chain is Large ribosomal subunit protein uL2 (279 aa).

2 disordered regions span residues 29–49 and 202–279; these read PVKQ…NGRV and NASI…KKKG. Over residues 36-49 the composition is skewed to low complexity; it reads GKSSSGGRNNNGRV. Residues 209-220 show a composition bias toward basic residues; the sequence is GRSRWLGRRPHN.

This sequence belongs to the universal ribosomal protein uL2 family. As to quaternary structure, part of the 50S ribosomal subunit. Forms a bridge to the 30S subunit in the 70S ribosome.

Its function is as follows. One of the primary rRNA binding proteins. Required for association of the 30S and 50S subunits to form the 70S ribosome, for tRNA binding and peptide bond formation. It has been suggested to have peptidyltransferase activity; this is somewhat controversial. Makes several contacts with the 16S rRNA in the 70S ribosome. The polypeptide is Large ribosomal subunit protein uL2 (Beijerinckia indica subsp. indica (strain ATCC 9039 / DSM 1715 / NCIMB 8712)).